The primary structure comprises 314 residues: Homoserine O-succinyltransferase (314 aa).

The active-site Acyl-thioester intermediate is cysteine 142. The substrate site is built by lysine 163 and serine 192. Histidine 235 (proton acceptor) is an active-site residue. Residue glutamate 237 is part of the active site. A substrate-binding site is contributed by arginine 249.

The protein belongs to the MetA family.

The protein resides in the cytoplasm. The enzyme catalyses L-homoserine + succinyl-CoA = O-succinyl-L-homoserine + CoA. Its pathway is amino-acid biosynthesis; L-methionine biosynthesis via de novo pathway; O-succinyl-L-homoserine from L-homoserine: step 1/1. Transfers a succinyl group from succinyl-CoA to L-homoserine, forming succinyl-L-homoserine. In Shewanella sediminis (strain HAW-EB3), this protein is Homoserine O-succinyltransferase.